The chain runs to 564 residues: Dihydroxy-acid dehydratase (564 aa).

Position 53 (cysteine 53) interacts with [2Fe-2S] cluster. Residue aspartate 85 participates in Mg(2+) binding. Residue cysteine 126 participates in [2Fe-2S] cluster binding. Residues aspartate 127 and lysine 128 each coordinate Mg(2+). An N6-carboxylysine modification is found at lysine 128. Residue cysteine 203 coordinates [2Fe-2S] cluster. Glutamate 454 contributes to the Mg(2+) binding site. The Proton acceptor role is filled by serine 480.

This sequence belongs to the IlvD/Edd family. As to quaternary structure, homodimer. [2Fe-2S] cluster is required as a cofactor. The cofactor is Mg(2+).

It carries out the reaction (2R)-2,3-dihydroxy-3-methylbutanoate = 3-methyl-2-oxobutanoate + H2O. The enzyme catalyses (2R,3R)-2,3-dihydroxy-3-methylpentanoate = (S)-3-methyl-2-oxopentanoate + H2O. It functions in the pathway amino-acid biosynthesis; L-isoleucine biosynthesis; L-isoleucine from 2-oxobutanoate: step 3/4. It participates in amino-acid biosynthesis; L-valine biosynthesis; L-valine from pyruvate: step 3/4. In terms of biological role, functions in the biosynthesis of branched-chain amino acids. Catalyzes the dehydration of (2R,3R)-2,3-dihydroxy-3-methylpentanoate (2,3-dihydroxy-3-methylvalerate) into 2-oxo-3-methylpentanoate (2-oxo-3-methylvalerate) and of (2R)-2,3-dihydroxy-3-methylbutanoate (2,3-dihydroxyisovalerate) into 2-oxo-3-methylbutanoate (2-oxoisovalerate), the penultimate precursor to L-isoleucine and L-valine, respectively. The protein is Dihydroxy-acid dehydratase of Clavibacter michiganensis subsp. michiganensis (strain NCPPB 382).